Here is a 207-residue protein sequence, read N- to C-terminus: LexA repressor (207 aa).

Positions 28–48 (RAEIAQKLGFKSANAAEEHLK) form a DNA-binding region, H-T-H motif. Catalysis depends on for autocatalytic cleavage activity residues S124 and K161.

This sequence belongs to the peptidase S24 family. Homodimer.

The catalysed reaction is Hydrolysis of Ala-|-Gly bond in repressor LexA.. Represses a number of genes involved in the response to DNA damage (SOS response), including recA and lexA. In the presence of single-stranded DNA, RecA interacts with LexA causing an autocatalytic cleavage which disrupts the DNA-binding part of LexA, leading to derepression of the SOS regulon and eventually DNA repair. This is LexA repressor from Aeromonas salmonicida (strain A449).